We begin with the raw amino-acid sequence, 303 residues long: GTPase Era (303 aa).

In terms of domain architecture, Era-type G spans 7–176; it reads KSGFVAIIGR…LDNVVSHLDE (170 aa). Residues 15–22 form a G1 region; the sequence is GRPNVGKS. 15–22 is a binding site for GTP; the sequence is GRPNVGKS. Residues 41-45 form a G2 region; that stretch reads QTTRN. The segment at 62-65 is G3; that stretch reads DTPG. Residues 62-66 and 125-128 each bind GTP; these read DTPGV and NKVD. Residues 125–128 form a G4 region; that stretch reads NKVD. Residues 155–157 form a G5 region; that stretch reads ISA. A KH type-2 domain is found at 207-284; that stretch reads TRQEVPHSVA…FLETWVKVEP (78 aa).

The protein belongs to the TRAFAC class TrmE-Era-EngA-EngB-Septin-like GTPase superfamily. Era GTPase family. As to quaternary structure, monomer.

The protein localises to the cytoplasm. The protein resides in the cell membrane. An essential GTPase that binds both GDP and GTP, with rapid nucleotide exchange. Plays a role in 16S rRNA processing and 30S ribosomal subunit biogenesis and possibly also in cell cycle regulation and energy metabolism. This Leuconostoc citreum (strain KM20) protein is GTPase Era.